Reading from the N-terminus, the 345-residue chain is RING finger protein 228 (345 aa).

A compositionally biased stretch (low complexity) spans 1 to 21 (MAAPASDSGGSQQSPSSSPGS). The tract at residues 1–43 (MAAPASDSGGSQQSPSSSPGSREGAGVAAKGAPDCGDAGARDA) is disordered. The RING-type zinc finger occupies 58–125 (CKICYNYFDA…PGAIACPVCR (68 aa)). Residues 159 to 213 (LPQDRLPPLPARLPAPAAAPPPTPAPPPPPSPAPPQPPPPPPAEDAAPGPRARPG) form a disordered region. The segment covering 163 to 201 (RLPPLPARLPAPAAAPPPTPAPPPPPSPAPPQPPPPPPA) has biased composition (pro residues). Residues 202 to 213 (EDAAPGPRARPG) are compositionally biased toward low complexity. Helical transmembrane passes span 236-256 (VCVV…LIFV) and 290-310 (LSVA…ICWL). Positions 319–345 (AGSTGGSGGGGGPRARAAAGGARRSDT) are disordered. Residues 321–331 (STGGSGGGGGP) are compositionally biased toward gly residues. The segment covering 332–345 (RARAAAGGARRSDT) has biased composition (low complexity).

It localises to the membrane. This chain is RING finger protein 228, found in Homo sapiens (Human).